The primary structure comprises 231 residues: MQDVLLQVQAVSKSYHDGDVTTQVLTEVDLQVFKGEQLAIVGTSGSGKSTLLHIMGTLDKPSAGKVLLAGEDLYQVSSARQAQIRNQDLGFIYQFHHLLPEFSALENVAMPAFIQGTDRAQAQADAKMLLERVGLGHRMSHIPAELSGGERQRVAIARALINKPKLVLADEPTGNLDAKSGEAVYELIRELANQLGTAFVVVTHDPKLAARMDRQLTMKNGYLQAVAEHAQ.

Positions 6-231 (LQVQAVSKSY…YLQAVAEHAQ (226 aa)) constitute an ABC transporter domain. Residue 42 to 49 (GTSGSGKS) coordinates ATP.

Belongs to the ABC transporter superfamily. Lipoprotein translocase (TC 3.A.1.125) family. In terms of assembly, the complex is composed of two ATP-binding proteins (LolD) and two transmembrane proteins (LolC and LolE).

Its subcellular location is the cell inner membrane. Its function is as follows. Part of the ABC transporter complex LolCDE involved in the translocation of mature outer membrane-directed lipoproteins, from the inner membrane to the periplasmic chaperone, LolA. Responsible for the formation of the LolA-lipoprotein complex in an ATP-dependent manner. The chain is Lipoprotein-releasing system ATP-binding protein LolD from Shewanella sp. (strain MR-4).